We begin with the raw amino-acid sequence, 609 residues long: Autophagy-related protein 22-1 (609 aa).

Helical transmembrane passes span 95–115, 117–137, 151–171, and 176–196; these read YYAG…GVEI, TASF…ILII, LLLV…LGVV, and MVGA…FVLL. The segment at 214 to 238 is disordered; it reads AREPPPALDGSRAQEGHSDTTNDID. A compositionally biased stretch (basic and acidic residues) spans 225-238; the sequence is RAQEGHSDTTNDID. The N-linked (GlcNAc...) asparagine glycan is linked to Asn244. A helical transmembrane segment spans residues 287–307; the sequence is IGIGYIGAIILQIVCILVVIA. N-linked (GlcNAc...) asparagine glycosylation is present at Asn309. 3 helical membrane-spanning segments follow: residues 317 to 337, 381 to 401, and 415 to 435; these read LVLF…ALWL, ILLF…VSGT, and AALG…AFSW. The N-linked (GlcNAc...) asparagine glycan is linked to Asn443. 4 helical membrane passes run 450-470, 487-509, 522-542, and 552-572; these read IIAC…GFIP, FPLG…SFFG, ALYA…VGII, and AFVF…LVDV.

This sequence belongs to the ATG22 family.

The protein resides in the vacuole membrane. In terms of biological role, vacuolar effluxer which mediate the efflux of amino acids resulting from autophagic degradation. The release of autophagic amino acids allows the maintenance of protein synthesis and viability during nitrogen starvation. The chain is Autophagy-related protein 22-1 (atg22-1) from Neosartorya fischeri (strain ATCC 1020 / DSM 3700 / CBS 544.65 / FGSC A1164 / JCM 1740 / NRRL 181 / WB 181) (Aspergillus fischerianus).